Here is a 299-residue protein sequence, read N- to C-terminus: N-acetylneuraminate lyase (299 aa).

Residues serine 45 and serine 46 each contribute to the aceneuramate site. Catalysis depends on tyrosine 134, which acts as the Proton donor. The Schiff-base intermediate with substrate role is filled by lysine 161. The aceneuramate site is built by threonine 163, glycine 185, aspartate 187, and glutamate 188.

The protein belongs to the DapA family. NanA subfamily. Homotetramer.

The protein resides in the cytoplasm. The catalysed reaction is aceneuramate = aldehydo-N-acetyl-D-mannosamine + pyruvate. Its pathway is amino-sugar metabolism; N-acetylneuraminate degradation; D-fructose 6-phosphate from N-acetylneuraminate: step 1/5. Its function is as follows. Catalyzes the reversible aldol cleavage of N-acetylneuraminic acid (sialic acid; Neu5Ac) to form pyruvate and N-acetylmannosamine (ManNAc) via a Schiff base intermediate. The protein is N-acetylneuraminate lyase of Rhizobium meliloti (strain 1021) (Ensifer meliloti).